A 1567-amino-acid chain; its full sequence is Transmembrane protein 131 homolog (1567 aa).

A signal peptide spans 1-32 (MPTQVQMRPLLRIFAEPILLILIFLFTLGAKG). Residues 33–1049 (EKVLQETFLG…RPGWESSLKN (1017 aa)) are Lumenal-facing. The segment at 55 to 228 (RLVPSRLDFG…TLKPVIRISF (174 aa)) is papD-L domain. N-linked (GlcNAc...) asparagine glycans are attached at residues asparagine 84, asparagine 114, asparagine 168, asparagine 235, asparagine 316, asparagine 317, asparagine 342, asparagine 372, asparagine 409, asparagine 462, asparagine 563, asparagine 890, and asparagine 1013. Residues 1050 to 1070 (AALVVLLASFGLVLVAAVFDA) form a helical membrane-spanning segment. Residues 1071-1567 (KAIMVQQNAY…SQRNNHNHMN (497 aa)) are Cytoplasmic-facing. Positions 1096-1130 (RNIVKLQAEEAAAKAESVQQQQKVKNGQLKELRKR) form a coiled coil. Disordered stretches follow at residues 1112 to 1337 (SVQQ…SPDA), 1364 to 1386 (PTDN…IGDN), and 1502 to 1567 (PGLE…NHMN). Low complexity-rich tracts occupy residues 1132 to 1150 (VVNS…SPWS) and 1166 to 1183 (KTVV…APAA). Phosphoserine occurs at positions 1201 and 1258. Residues 1247–1259 (AKSSPPQQENISP) are compositionally biased toward polar residues. Over residues 1284 to 1298 (PGRERERERRSKDQK) the composition is skewed to basic and acidic residues. The span at 1319–1331 (KLNFGQTTNSTSP) shows a compositional bias: polar residues. Polar residues-rich tracts occupy residues 1507–1519 (SARQ…QEQV) and 1536–1561 (LPTQ…SQRN).

The protein belongs to the TMEM131 family. In terms of assembly, may interact (via PapD-L domain) with collagen proteins (via C-terminus); the interaction is direct and is involved in assembly and TRAPPIII ER-to-Golgi transport complex-dependent secretion of collagen.

It localises to the membrane. Collagen binding transmembrane protein involved in collagen secretion, probably by recruiting the ER-to-Golgi transport complex TRAPPIII. This chain is Transmembrane protein 131 homolog, found in Drosophila melanogaster (Fruit fly).